A 130-amino-acid chain; its full sequence is Small ribosomal subunit protein uS9 (130 aa).

Belongs to the universal ribosomal protein uS9 family.

This Clostridium beijerinckii (strain ATCC 51743 / NCIMB 8052) (Clostridium acetobutylicum) protein is Small ribosomal subunit protein uS9.